The chain runs to 349 residues: Protein RecA (349 aa).

Position 65–72 (65–72) interacts with ATP; that stretch reads GPESSGKT. A disordered region spans residues 329–349; that stretch reads KASDQTAAHDETEEEPDLLES. The segment covering 339 to 349 has biased composition (acidic residues); that stretch reads ETEEEPDLLES.

It belongs to the RecA family.

It localises to the cytoplasm. In terms of biological role, can catalyze the hydrolysis of ATP in the presence of single-stranded DNA, the ATP-dependent uptake of single-stranded DNA by duplex DNA, and the ATP-dependent hybridization of homologous single-stranded DNAs. It interacts with LexA causing its activation and leading to its autocatalytic cleavage. In Acinetobacter baylyi (strain ATCC 33305 / BD413 / ADP1), this protein is Protein RecA.